The sequence spans 107 residues: Hydrogenase expression/formation protein HoxL (107 aa).

It belongs to the HupF/HypC family.

This Cupriavidus necator (strain ATCC 17699 / DSM 428 / KCTC 22496 / NCIMB 10442 / H16 / Stanier 337) (Ralstonia eutropha) protein is Hydrogenase expression/formation protein HoxL (hoxL).